Consider the following 858-residue polypeptide: Heat shock protein 105 kDa (858 aa).

An N-acetylserine modification is found at serine 2. At lysine 471 the chain carries N6-acetyllysine. Disordered regions lie at residues 500–584 and 796–858; these read KVPT…PPEA and CEPV…MDLD. Over residues 504 to 514 the composition is skewed to acidic residues; the sequence is EENEMSSEADM. Phosphoserine occurs at positions 509 and 510. Residues 532-554 are compositionally biased toward polar residues; the sequence is QQDNSEAGTQPQVQTDAQQTSQS. Serine 557 is subject to Phosphoserine. Threonine 561 bears the Phosphothreonine mark. 2 stretches are compositionally biased toward basic and acidic residues: residues 563–584 and 805–814; these read EENK…PPEA and PKIESPKLER. Serine 809 is subject to Phosphoserine. A Phosphothreonine modification is found at threonine 815. The span at 821-832 shows a compositional bias: basic and acidic residues; that stretch reads IDKKEEDLEDKN. Over residues 849–858 the composition is skewed to polar residues; sequence EKNSVNMDLD.

The protein belongs to the heat shock protein 70 family. In terms of assembly, interacts with HSPA8/HSC70. Interacts with HSPA1A (via NBD) and HSPA1B (via NBD). In terms of processing, phosphorylation on Ser-509 may be important for regulation of the HSPA8/HSC70 chaperone activity. As to expression, highly expressed in testis. Present at lower levels in most brain regions, except cerebellum. Overexpressed in cancer cells.

It is found in the cytoplasm. Acts as a nucleotide-exchange factor (NEF) for chaperone proteins HSPA1A and HSPA1B, promoting the release of ADP from HSPA1A/B thereby triggering client/substrate protein release. Prevents the aggregation of denatured proteins in cells under severe stress, on which the ATP levels decrease markedly. Inhibits HSPA8/HSC70 ATPase and chaperone activities. The polypeptide is Heat shock protein 105 kDa (HSPH1) (Homo sapiens (Human)).